A 141-amino-acid chain; its full sequence is Extracellular globin-1 (141 aa).

Residues 1-141 (DCNTLKRFKV…YAVIAAGIKP (141 aa)) enclose the Globin domain. A disulfide bridge links cysteine 2 with cysteine 131. Position 94 (histidine 94) interacts with heme b.

This sequence belongs to the globin family. As to quaternary structure, the giant hemoglobins of worms are formed of a monomeric subunit and a disulfide-bonded trimer. This subunit is monomeric.

The protein resides in the secreted. The polypeptide is Extracellular globin-1 (Metaphire sieboldi (Earthworm)).